A 291-amino-acid chain; its full sequence is MMRIVIFLLTNLAVMVVFGILLTCVGTHSSNTVRLMIISGLFGFCGAFISLLMSKFIALRSVGGKVISQPQNETEHWLLNIILNQAQKIGITMPQVAIYNAPDMNAFATGPSRNNSLVAVSTGLLQNMPRTEIEAVIAHEISHISNGDMVTITLISGIVNTFVIFISRFLAQLTAGFIGSNNEESNNGNKLVYMIVSTILELAFGILASIIVLWFSRYREFYADAGSANIVGCDKMIAALQRLKTSYEPKVTNNIKIFCINGYQKSLSEFFMSHPPLNKRIEALRYGTYMK.

Helical transmembrane passes span 4 to 24 (IVIF…LLTC) and 37 to 57 (IISG…SKFI). H139 is a Zn(2+) binding site. Residue E140 is part of the active site. A Zn(2+)-binding site is contributed by H143. Transmembrane regions (helical) follow at residues 147-167 (GDMV…IFIS) and 195-215 (IVST…VLWF). E220 is a binding site for Zn(2+).

Belongs to the peptidase M48B family. Requires Zn(2+) as cofactor.

It is found in the cell membrane. This chain is Protease HtpX, found in Baumannia cicadellinicola subsp. Homalodisca coagulata.